A 356-amino-acid polypeptide reads, in one-letter code: Dual-specificity RNA methyltransferase RlmN (356 aa).

Glu-95 (proton acceptor) is an active-site residue. In terms of domain architecture, Radical SAM core spans 101–332 (EDERGTLCIS…VTVIRDRRGE (232 aa)). Cysteines 108 and 338 form a disulfide. [4Fe-4S] cluster-binding residues include Cys-115, Cys-119, and Cys-122. S-adenosyl-L-methionine is bound by residues 165–166 (GE), Ser-197, 219–221 (SLH), and Asn-295. The active-site S-methylcysteine intermediate is Cys-338.

Belongs to the radical SAM superfamily. RlmN family. [4Fe-4S] cluster serves as cofactor.

It localises to the cytoplasm. The catalysed reaction is adenosine(2503) in 23S rRNA + 2 reduced [2Fe-2S]-[ferredoxin] + 2 S-adenosyl-L-methionine = 2-methyladenosine(2503) in 23S rRNA + 5'-deoxyadenosine + L-methionine + 2 oxidized [2Fe-2S]-[ferredoxin] + S-adenosyl-L-homocysteine. It carries out the reaction adenosine(37) in tRNA + 2 reduced [2Fe-2S]-[ferredoxin] + 2 S-adenosyl-L-methionine = 2-methyladenosine(37) in tRNA + 5'-deoxyadenosine + L-methionine + 2 oxidized [2Fe-2S]-[ferredoxin] + S-adenosyl-L-homocysteine. Its function is as follows. Specifically methylates position 2 of adenine 2503 in 23S rRNA and position 2 of adenine 37 in tRNAs. m2A2503 modification seems to play a crucial role in the proofreading step occurring at the peptidyl transferase center and thus would serve to optimize ribosomal fidelity. This chain is Dual-specificity RNA methyltransferase RlmN, found in Magnetococcus marinus (strain ATCC BAA-1437 / JCM 17883 / MC-1).